Here is a 245-residue protein sequence, read N- to C-terminus: 1-(5-phosphoribosyl)-5-[(5-phosphoribosylamino)methylideneamino] imidazole-4-carboxamide isomerase (245 aa).

Catalysis depends on aspartate 8, which acts as the Proton acceptor. Aspartate 130 (proton donor) is an active-site residue.

This sequence belongs to the HisA/HisF family.

Its subcellular location is the cytoplasm. It carries out the reaction 1-(5-phospho-beta-D-ribosyl)-5-[(5-phospho-beta-D-ribosylamino)methylideneamino]imidazole-4-carboxamide = 5-[(5-phospho-1-deoxy-D-ribulos-1-ylimino)methylamino]-1-(5-phospho-beta-D-ribosyl)imidazole-4-carboxamide. It functions in the pathway amino-acid biosynthesis; L-histidine biosynthesis; L-histidine from 5-phospho-alpha-D-ribose 1-diphosphate: step 4/9. The protein is 1-(5-phosphoribosyl)-5-[(5-phosphoribosylamino)methylideneamino] imidazole-4-carboxamide isomerase of Pseudomonas fluorescens (strain ATCC BAA-477 / NRRL B-23932 / Pf-5).